The sequence spans 168 residues: Phospholipase A and acyltransferase 1 (168 aa).

The Cytoplasmic segment spans residues 1–138; that stretch reads MAFNDCFSLN…GEGVSEQANR (138 aa). One can recognise an LRAT domain in the interval 20–135; sequence LIEVFRPGYQ…LRYGEGVSEQ (116 aa). The active site involves His-30. Residue Cys-119 is the Acyl-thioester intermediate of the active site. Residues 139–159 form a helical membrane-spanning segment; the sequence is AISTVEFVTAAVGVFSFLGLF. Residues 160–168 lie on the Lumenal side of the membrane; that stretch reads PKGQRAKYY.

The protein belongs to the H-rev107 family. In terms of tissue distribution, abundantly expressed in testis, skeletal muscle, brain, and heart. As to expression, highly expressed in the testis, skeletal muscle, brain, heart, and thyroid.

It is found in the membrane. Its subcellular location is the cytoplasm. It localises to the nucleus. The enzyme catalyses a 1,2-diacyl-sn-glycero-3-phosphocholine + H2O = a 1-acyl-sn-glycero-3-phosphocholine + a fatty acid + H(+). The catalysed reaction is a 1,2-diacyl-sn-glycero-3-phosphocholine + H2O = a 2-acyl-sn-glycero-3-phosphocholine + a fatty acid + H(+). It carries out the reaction 1,2-dihexadecanoyl-sn-glycero-3-phosphocholine + H2O = 2-hexadecanoyl-sn-glycero-3-phosphocholine + hexadecanoate + H(+). It catalyses the reaction 1,2-dihexadecanoyl-sn-glycero-3-phosphocholine + H2O = 1-hexadecanoyl-sn-glycero-3-phosphocholine + hexadecanoate + H(+). The enzyme catalyses 1-hexadecanoyl-2-(5Z,8Z,11Z,14Z-eicosatetraenoyl)-sn-glycero-3-phosphoethanolamine + H2O = 2-(5Z,8Z,11Z,14Z)-eicosatetraenoyl-sn-glycero-3-phosphoethanolamine + hexadecanoate + H(+). The catalysed reaction is 1-hexadecanoyl-2-(5Z,8Z,11Z,14Z-eicosatetraenoyl)-sn-glycero-3-phosphoethanolamine + H2O = 1-hexadecanoyl-sn-glycero-3-phosphoethanolamine + (5Z,8Z,11Z,14Z)-eicosatetraenoate + H(+). It carries out the reaction 1,2-di-(9Z-octadecenoyl)-sn-glycero-3-phosphoethanolamine + 1,2-dihexadecanoyl-sn-glycero-3-phosphocholine = hexadecanoyl-sn-glycero-3-phosphocholine + N-hexadecanoyl-1,2-di-(9Z-octadecenoyl)-sn-glycero-3-phosphoethanolamine + H(+). It catalyses the reaction 1,2-dihexadecanoyl-sn-glycero-3-phosphocholine + a 2-acyl-sn-glycero-3-phosphocholine = a 1-hexadecanoyl-2-acyl-sn-glycero-3-phosphocholine + 2-hexadecanoyl-sn-glycero-3-phosphocholine. In terms of biological role, exhibits both phospholipase A1/2 and acyltransferase activities. Shows phospholipase A1 (PLA1) and A2 (PLA2) activity, catalyzing the calcium-independent release of fatty acids from the sn-1 or sn-2 position of glycerophospholipids. Shows O-acyltransferase activity, catalyzing the transfer of a fatty acyl group from glycerophospholipid to the hydroxyl group of lysophospholipid. Shows N-acyltransferase activity, catalyzing the calcium-independent transfer of a fatty acyl group at the sn-1 position of phosphatidylcholine (PC) and other glycerophospholipids to the primary amine of phosphatidylethanolamine (PE), forming N-acylphosphatidylethanolamine (NAPE) which serves as precursor for N-acylethanolamines (NAEs). This is Phospholipase A and acyltransferase 1 from Homo sapiens (Human).